A 936-amino-acid chain; its full sequence is Isoleucine--tRNA ligase (936 aa).

The short motif at 58–68 (PYANGRAHLGT) is the 'HIGH' region element. Residue glutamate 561 participates in L-isoleucyl-5'-AMP binding. Positions 602–606 (KMSKS) match the 'KMSKS' region motif. Lysine 605 contacts ATP. The Zn(2+) site is built by cysteine 899, cysteine 902, cysteine 919, and cysteine 922.

The protein belongs to the class-I aminoacyl-tRNA synthetase family. IleS type 1 subfamily. Monomer. Zn(2+) serves as cofactor.

Its subcellular location is the cytoplasm. The catalysed reaction is tRNA(Ile) + L-isoleucine + ATP = L-isoleucyl-tRNA(Ile) + AMP + diphosphate. Catalyzes the attachment of isoleucine to tRNA(Ile). As IleRS can inadvertently accommodate and process structurally similar amino acids such as valine, to avoid such errors it has two additional distinct tRNA(Ile)-dependent editing activities. One activity is designated as 'pretransfer' editing and involves the hydrolysis of activated Val-AMP. The other activity is designated 'posttransfer' editing and involves deacylation of mischarged Val-tRNA(Ile). In Coxiella burnetii (strain RSA 331 / Henzerling II), this protein is Isoleucine--tRNA ligase.